Here is a 200-residue protein sequence, read N- to C-terminus: ATP-dependent Clp protease proteolytic subunit (200 aa).

Serine 105 acts as the Nucleophile in catalysis. The active site involves histidine 130.

The protein belongs to the peptidase S14 family. As to quaternary structure, fourteen ClpP subunits assemble into 2 heptameric rings which stack back to back to give a disk-like structure with a central cavity, resembling the structure of eukaryotic proteasomes.

The protein resides in the cytoplasm. The catalysed reaction is Hydrolysis of proteins to small peptides in the presence of ATP and magnesium. alpha-casein is the usual test substrate. In the absence of ATP, only oligopeptides shorter than five residues are hydrolyzed (such as succinyl-Leu-Tyr-|-NHMec, and Leu-Tyr-Leu-|-Tyr-Trp, in which cleavage of the -Tyr-|-Leu- and -Tyr-|-Trp bonds also occurs).. Functionally, cleaves peptides in various proteins in a process that requires ATP hydrolysis. Has a chymotrypsin-like activity. Plays a major role in the degradation of misfolded proteins. The polypeptide is ATP-dependent Clp protease proteolytic subunit (Hydrogenovibrio crunogenus (strain DSM 25203 / XCL-2) (Thiomicrospira crunogena)).